Here is a 256-residue protein sequence, read N- to C-terminus: Imidazole glycerol phosphate synthase subunit HisF (256 aa).

Active-site residues include Asp12 and Asp131.

This sequence belongs to the HisA/HisF family. In terms of assembly, heterodimer of HisH and HisF.

It localises to the cytoplasm. The enzyme catalyses 5-[(5-phospho-1-deoxy-D-ribulos-1-ylimino)methylamino]-1-(5-phospho-beta-D-ribosyl)imidazole-4-carboxamide + L-glutamine = D-erythro-1-(imidazol-4-yl)glycerol 3-phosphate + 5-amino-1-(5-phospho-beta-D-ribosyl)imidazole-4-carboxamide + L-glutamate + H(+). The protein operates within amino-acid biosynthesis; L-histidine biosynthesis; L-histidine from 5-phospho-alpha-D-ribose 1-diphosphate: step 5/9. Its function is as follows. IGPS catalyzes the conversion of PRFAR and glutamine to IGP, AICAR and glutamate. The HisF subunit catalyzes the cyclization activity that produces IGP and AICAR from PRFAR using the ammonia provided by the HisH subunit. The protein is Imidazole glycerol phosphate synthase subunit HisF of Pseudomonas putida (strain ATCC 700007 / DSM 6899 / JCM 31910 / BCRC 17059 / LMG 24140 / F1).